We begin with the raw amino-acid sequence, 269 residues long: 3-methyl-2-oxobutanoate hydroxymethyltransferase (269 aa).

Residues Asp-52 and Asp-91 each coordinate Mg(2+). Residues 52 to 53 (DT), Asp-91, and Lys-121 contribute to the 3-methyl-2-oxobutanoate site. Glu-123 lines the Mg(2+) pocket. The Proton acceptor role is filled by Glu-186.

The protein belongs to the PanB family. As to quaternary structure, homodecamer; pentamer of dimers. The cofactor is Mg(2+).

Its subcellular location is the cytoplasm. It catalyses the reaction 3-methyl-2-oxobutanoate + (6R)-5,10-methylene-5,6,7,8-tetrahydrofolate + H2O = 2-dehydropantoate + (6S)-5,6,7,8-tetrahydrofolate. It participates in cofactor biosynthesis; (R)-pantothenate biosynthesis; (R)-pantoate from 3-methyl-2-oxobutanoate: step 1/2. In terms of biological role, catalyzes the reversible reaction in which hydroxymethyl group from 5,10-methylenetetrahydrofolate is transferred onto alpha-ketoisovalerate to form ketopantoate. This Rhodopirellula baltica (strain DSM 10527 / NCIMB 13988 / SH1) protein is 3-methyl-2-oxobutanoate hydroxymethyltransferase.